Consider the following 119-residue polypeptide: Large ribosomal subunit protein uL18 (119 aa).

The disordered stretch occupies residues 1–20; sequence MISKPDKNKTRQKRHTRVRG. The span at 10-20 shows a compositional bias: basic residues; it reads TRQKRHTRVRG.

Belongs to the universal ribosomal protein uL18 family. As to quaternary structure, part of the 50S ribosomal subunit; part of the 5S rRNA/L5/L18/L25 subcomplex. Contacts the 5S and 23S rRNAs.

This is one of the proteins that bind and probably mediate the attachment of the 5S RNA into the large ribosomal subunit, where it forms part of the central protuberance. The protein is Large ribosomal subunit protein uL18 of Latilactobacillus sakei subsp. sakei (strain 23K) (Lactobacillus sakei subsp. sakei).